Reading from the N-terminus, the 490-residue chain is Protein OrfX3 (490 aa).

The protein belongs to the TULIP P47 family. As to quaternary structure, part of a crude toxin extract that includes BoNTA2/NTNH, P47, OrfX2 and OrfX3; OrfX1 was not detected. Post-translationally, shorter forms of this protein are seen in vivo.

Part of a botulinum neurotoxin type A2 (BoNT) locus; may be part of a progenitor toxin complex required to protect BoNT during its passage through the host gastrointestinal tract. The protein is Protein OrfX3 (orfX3) of Clostridium botulinum (strain Kyoto / Type A2).